The primary structure comprises 131 residues: Aspartate 1-decarboxylase (131 aa).

The active-site Schiff-base intermediate with substrate; via pyruvic acid is the Ser25. Ser25 carries the pyruvic acid (Ser) modification. Thr57 provides a ligand contact to substrate. The active-site Proton donor is Tyr58. 73-75 provides a ligand contact to substrate; that stretch reads GAA.

The protein belongs to the PanD family. In terms of assembly, heterooctamer of four alpha and four beta subunits. Pyruvate serves as cofactor. Is synthesized initially as an inactive proenzyme, which is activated by self-cleavage at a specific serine bond to produce a beta-subunit with a hydroxyl group at its C-terminus and an alpha-subunit with a pyruvoyl group at its N-terminus.

It is found in the cytoplasm. It catalyses the reaction L-aspartate + H(+) = beta-alanine + CO2. Its pathway is cofactor biosynthesis; (R)-pantothenate biosynthesis; beta-alanine from L-aspartate: step 1/1. Functionally, catalyzes the pyruvoyl-dependent decarboxylation of aspartate to produce beta-alanine. The protein is Aspartate 1-decarboxylase of Acaryochloris marina (strain MBIC 11017).